The sequence spans 465 residues: ATP synthase subunit beta (465 aa).

148 to 155 contributes to the ATP binding site; that stretch reads GGAGVGKT.

This sequence belongs to the ATPase alpha/beta chains family. As to quaternary structure, F-type ATPases have 2 components, CF(1) - the catalytic core - and CF(0) - the membrane proton channel. CF(1) has five subunits: alpha(3), beta(3), gamma(1), delta(1), epsilon(1). CF(0) has three main subunits: a(1), b(2) and c(9-12). The alpha and beta chains form an alternating ring which encloses part of the gamma chain. CF(1) is attached to CF(0) by a central stalk formed by the gamma and epsilon chains, while a peripheral stalk is formed by the delta and b chains.

The protein localises to the cell inner membrane. It carries out the reaction ATP + H2O + 4 H(+)(in) = ADP + phosphate + 5 H(+)(out). Functionally, produces ATP from ADP in the presence of a proton gradient across the membrane. The catalytic sites are hosted primarily by the beta subunits. The polypeptide is ATP synthase subunit beta (Neisseria meningitidis serogroup A / serotype 4A (strain DSM 15465 / Z2491)).